We begin with the raw amino-acid sequence, 330 residues long: (11Z)-hexadec-11-enoyl-CoA conjugase (330 aa).

The next 2 membrane-spanning stretches (helical) occupy residues 37 to 57 (IVVMNVIRFSYLHIAGLYGLY) and 65 to 85 (LATSVFAIVLFFLGNFGITAG). The Histidine box-1 signature appears at 87–92 (HRLWSH). A helical transmembrane segment spans residues 101–121 (LEILLMVFNSIAFQNTIFTWV). Positions 124-128 (HRLHH) match the Histidine box-2 motif. Helical transmembrane passes span 185–205 (AIPFIGTICFIIPTLAPMYFW) and 216–238 (TVLRYIFSLNGTFLVNSAAHLWG). The Histidine box-3 signature appears at 264-268 (HNYHH).

This sequence belongs to the fatty acid desaturase type 1 family. Fe(2+) serves as cofactor. In terms of tissue distribution, highly expressed in the pheromone gland.

The protein localises to the membrane. It catalyses the reaction an 11,12-saturated fatty acyl-CoA + 2 Fe(II)-[cytochrome b5] + O2 + 2 H(+) = an (11Z)-Delta(11)-fatty acyl-CoA + 2 Fe(III)-[cytochrome b5] + 2 H2O. It carries out the reaction (11Z)-hexadecenoyl-CoA + AH2 + O2 = (10E,12Z)-hexadecadienoyl-CoA + A + 2 H2O. Fatty acid desaturase that catalyzes 2 consecutive steps in the biosynthesis of bombykol, a sex pheromone produced by the moth. First acts as an acyl-CoA Delta(11) desaturase (1) by catalyzing the formation of Delta(11) fatty acyl precursors. Then acts as a (11Z)-hexadec-11-enoyl-CoA conjugase (2) by converting a single cis double bond at position 11 of (11Z)-hexadec-11-enoyl-CoA into conjugated 10 trans and 12 cis double bonds. In Bombyx mori (Silk moth), this protein is (11Z)-hexadec-11-enoyl-CoA conjugase.